We begin with the raw amino-acid sequence, 488 residues long: Acetyl-CoA decarbonylase/synthase complex subunit gamma (488 aa).

Positions Met1–Glu61 constitute a 4Fe-4S domain. The [4Fe-4S] cluster site is built by Cys19, Cys22, Cys27, and Cys44.

Heterodimer of delta and gamma chains. The ACDS complex is made up of alpha, epsilon, beta, gamma and delta chains with a probable stoichiometry of (alpha(2)epsilon(2))(4)-beta(8)-(gamma(1)delta(1))(8). It depends on corrinoid as a cofactor. Requires [4Fe-4S] cluster as cofactor.

It carries out the reaction 5,6,7,8-tetrahydrosarcinapterin + methyl-Co(III)-[corrinoid Fe-S protein] = 5-methyltetrahydrosarcinapterin + Co(I)-[corrinoid Fe-S protein] + H(+). Its function is as follows. Part of a complex that catalyzes the reversible cleavage of acetyl-CoA, allowing autotrophic growth from CO(2). This Methanocaldococcus jannaschii (strain ATCC 43067 / DSM 2661 / JAL-1 / JCM 10045 / NBRC 100440) (Methanococcus jannaschii) protein is Acetyl-CoA decarbonylase/synthase complex subunit gamma.